A 114-amino-acid chain; its full sequence is uncharacterized protein (114 aa).

The 109-residue stretch at 6-114 (IFKNIIQRKI…LGGKKLKSFS (109 aa)) folds into the HIT domain.

This is an uncharacterized protein from Buchnera aphidicola subsp. Acyrthosiphon pisum (strain APS) (Acyrthosiphon pisum symbiotic bacterium).